The primary structure comprises 881 residues: MSSSSSSLLLMMLLLLLLLLTSKLEAIPVLSSTSPSPGVRILRSSESIVAPLDDEVVFECETSLPPERFEWSYSNTSSSSSAISSSFIYLSSVAGKVNISHEYAISRLAIVVRPESLGEYRCVGWFGPLVVTSTIARLDLASISLATKKESHLNWRTAPGNSIIWPCGQQVQANPLASWSFYKNGKEIQPLNHNGTLILNNISSESNGVYSCMATNTASGVRLPIPSSMELHVTKQEGSKSPYLLFGQPTRQSVTTREGQRLLLVCPGVGSPPPIPVWSSPNVTAAVPNKRSKLLSYGLEINPVQVEDAGIYICYLDNGIRPPLELYINVRVEQAPVIVQAPWAGSLTNESDRLQLECQAKGEPKPTIYWLLNGKRSHEVNQSQLLSNGRYLVLKKVLKEHAGYVQCFARNHLGEHSAGTLLQVNPKLVNETDLVVSRPQRPKKLQIMVPPSAPNVTRLSDESVMLRWHVQRNEGLPIQFFKVQYRLINEGKRKMWQTTNENIPYGKPKWNSALGKNFTASVTNLKPQRTYRFRIMAVYSNNDNKESNTSAKFFLQRGSSLEPMPVPELVKIDEYSETAVVLHWRLSDDADEQSITGYYAYYRPSSFAGEYSKATIEGAKARSFHIGSLEVGTIYEFKLQSFSADSASEFSALKQGRTQRSKLTTTEQPIQQKGGDRNVNTTPNHNETYSLNPLLTGTIGGGALLLLLLIAFSFCLCRRKNRNGGDGRNSQNKPRLAELREDFLPLAGGGVPGSKQRQRSRHIHITLNPLDQQQQQPLDEKNTNTNLNSPHLEADPELVYFQRQQQNHPTTYDYDHGQRRLSSSSLRRSQRTLERTPGSNNNLQQIGSETTTTGQRVILKRPRLSSRSENLSSGSLNSVGV.

A signal peptide spans 1–26 (MSSSSSSLLLMMLLLLLLLLTSKLEA). The Extracellular segment spans residues 27 to 693 (IPVLSSTSPS…NHNETYSLNP (667 aa)). 4 Ig-like C2-type domains span residues 37 to 138 (PGVR…IARL), 128 to 228 (PLVV…IPSS), 242 to 330 (PYLL…YINV), and 336 to 425 (PVIV…LQVN). Disulfide bonds link cysteine 60–cysteine 122, cysteine 167–cysteine 212, and cysteine 266–cysteine 314. Residues asparagine 75, asparagine 98, asparagine 194, asparagine 201, asparagine 282, asparagine 349, asparagine 381, asparagine 430, and asparagine 455 are each glycosylated (N-linked (GlcNAc...) asparagine). A disulfide bridge links cysteine 358 with cysteine 407. Fibronectin type-III domains are found at residues 450 to 558 (PPSA…LQRG) and 566 to 661 (VPEL…TQRS). Heparin-binding residues include arginine 486, lysine 492, and lysine 494. Asparagine 517 carries an N-linked (GlcNAc...) asparagine glycan. Position 532 (arginine 532) interacts with heparin. The N-linked (GlcNAc...) asparagine glycan is linked to asparagine 548. The segment at 655-685 (QGRTQRSKLTTTEQPIQQKGGDRNVNTTPNH) is disordered. The segment covering 656–671 (GRTQRSKLTTTEQPIQ) has biased composition (polar residues). Asparagine 686 carries N-linked (GlcNAc...) asparagine glycosylation. The chain crosses the membrane as a helical span at residues 694–714 (LLTGTIGGGALLLLLLIAFSF). The Cytoplasmic segment spans residues 715–881 (CLCRRKNRNG…SSGSLNSVGV (167 aa)). Disordered stretches follow at residues 768-791 (NPLDQQQQQPLDEKNTNTNLNSPH) and 809-881 (PTTY…SVGV). The span at 837 to 855 (PGSNNNLQQIGSETTTTGQ) shows a compositional bias: polar residues. The span at 865–881 (SSRSENLSSGSLNSVGV) shows a compositional bias: low complexity.

This sequence belongs to the immunoglobulin superfamily. IHOG family. In terms of assembly, homodimer. Heterotetramer; 2 iHog chains bind 2 hh chains when facilitated by heparin, heparin is required to promote high-affinity interactions between hh and iHog.

It is found in the membrane. In terms of biological role, mediates response to the active Hedgehog (Hh) protein signal in embryos, functioning upstream or at the level of patched (ptc). The chain is Interference hedgehog from Drosophila willistoni (Fruit fly).